The primary structure comprises 287 residues: Glutamate racemase (287 aa).

A compositionally biased stretch (polar residues) spans 1-15; that stretch reads MATKPQDANTTSREA. Residues 1-25 form a disordered region; that stretch reads MATKPQDANTTSREAITSKADSPPR. Residues 32 to 33 and 64 to 65 contribute to the substrate site; these read DS and YG. Cys96 (proton donor/acceptor) is an active-site residue. Substrate is bound at residue 97-98; the sequence is NT. Cys208 (proton donor/acceptor) is an active-site residue. Position 209-210 (209-210) interacts with substrate; the sequence is TH.

Belongs to the aspartate/glutamate racemases family.

It catalyses the reaction L-glutamate = D-glutamate. Its pathway is cell wall biogenesis; peptidoglycan biosynthesis. Its function is as follows. Provides the (R)-glutamate required for cell wall biosynthesis. The protein is Glutamate racemase of Yersinia pseudotuberculosis serotype IB (strain PB1/+).